Consider the following 268-residue polypeptide: Norsolorinic acid ketoreductase nor1 (268 aa).

NADP(+)-binding residues include Ile32, Asp79, Asn108, Tyr182, Lys186, Val213, and Thr215. Catalysis depends on Tyr182, which acts as the Proton donor. Residue Lys186 is the Lowers pKa of active site Tyr of the active site.

The protein belongs to the short-chain dehydrogenases/reductases (SDR) family.

It localises to the cytoplasm. It is found in the cytosol. The protein resides in the vacuole. The enzyme catalyses (1'S)-averantin + NADP(+) = norsolorinic acid + NADPH + H(+). It participates in mycotoxin biosynthesis. Functionally, norsolorinic acid ketoreductase; part of the fragmented gene cluster that mediates the biosynthesis of dothistromin (DOTH), a polyketide toxin very similar in structure to the aflatoxin precursor, versicolorin B. The first step of the pathway is the conversion of acetate to norsolorinic acid (NOR) and requires the fatty acid synthase subunits hexA and hexB, as well as the polyketide synthase pksA. PksA combines a hexanoyl starter unit and 7 malonyl-CoA extender units to synthesize the precursor NOR. The hexanoyl starter unit is provided to the acyl-carrier protein (ACP) domain by the fungal fatty acid synthase hexA/hexB. The second step is the conversion of NOR to averantin (AVN) and requires the norsolorinic acid ketoreductase nor1, which catalyzes the dehydration of norsolorinic acid to form (1'S)-averantin. The cytochrome P450 monooxygenase avnA then catalyzes the hydroxylation of AVN to 5'hydroxyaverantin (HAVN). The next step is performed by adhA that transforms HAVN to averufin (AVF). Averufin might then be converted to hydroxyversicolorone by cypX and avfA. Hydroxyversicolorone is further converted versiconal hemiacetal acetate (VHA) by moxY. VHA is then the substrate for the versiconal hemiacetal acetate esterase est1 to yield versiconal (VAL). Versicolorin B synthase vbsA then converts VAL to versicolorin B (VERB) by closing the bisfuran ring. Then, the activity of the versicolorin B desaturase verB leads to versicolorin A (VERA). DotB, a predicted chloroperoxidase, may perform epoxidation of the A-ring of VERA. Alternatively, a cytochrome P450, such as cypX or avnA could catalyze this step. It is also possible that another, uncharacterized, cytochrome P450 enzyme is responsible for this step. Opening of the epoxide could potentially be achieved by the epoxide hydrolase epoA. However, epoA seems not to be required for DOTH biosynthesis, but other epoxide hydrolases may have the ability to complement this hydrolysis. Alternatively, opening of the epoxide ring could be achieved non-enzymatically. The next step is the deoxygenation of ring A to yield the 5,8-dihydroxyanthraquinone which is most likely catalyzed by the NADPH dehydrogenase encoded by ver1. The last stages of DOTH biosynthesis are proposed to involve hydroxylation of the bisfuran. OrdB and norB might have oxidative roles here. An alternative possibility is that cytochrome P450 monoogenases such as avnA and cypX might perform these steps in addition to previously proposed steps. This is Norsolorinic acid ketoreductase nor1 from Dothistroma septosporum (strain NZE10 / CBS 128990) (Red band needle blight fungus).